Reading from the N-terminus, the 1088-residue chain is DNA damage-binding protein 1a (1088 aa).

This sequence belongs to the DDB1 family. Component of the CDD complex, at least composed of COP10, DET1 and DDB1A. Component of the CUL4-RBX1-CDD complex. Component of the CUL4-RBX1-DDB1-PRL1 E3 ubiquitin-protein ligase complex. Component of the UV-DDB complex, which is composed of DDB1A and DDB2. Interacts with RAE1. Interacts with WDR55. Interacts with ATCSA-1. Interacts with DDA1. Binds to ASG2; the subcellular localization of this complex depends on ASG2 farnesylation status. Binds to KTN80.2/DWA3. Interacts with HTD1. Interacts directly with DHU1.

The protein localises to the cytoplasm. It is found in the nucleus. It functions in the pathway protein modification; protein ubiquitination. Functionally, component of light signal transduction machinery. Involved in repression of photomorphogenesis in darkness by participating in the CDD complex, a complex probably required to regulate the activity of ubiquitin conjugating enzymes (E2s). Repression of photomorphogenesis is probably mediated by ubiquitination and subsequent degradation of photomorphogenesis-promoting factors such as HY5, HYH and LAF1. Plays a role in DNA repair by forming with DDB2 the UV-damaged DNA-binding protein complex (UV-DDB). Component of the CUL4-RBX1-DDB1-PRL1 E3 ubiquitin-protein ligase complex. This Arabidopsis thaliana (Mouse-ear cress) protein is DNA damage-binding protein 1a.